The chain runs to 37 residues: Large ribosomal subunit protein bL36 (37 aa).

It belongs to the bacterial ribosomal protein bL36 family.

The chain is Large ribosomal subunit protein bL36 from Photobacterium profundum (strain SS9).